The primary structure comprises 460 residues: Angiopoietin-related protein 3 (460 aa).

An N-terminal signal peptide occupies residues 1-16 (MFTIKLLLFIVPLVIS). The sufficient to inhibit LPL lipase activity stretch occupies residues 17–165 (SRIDQDNSSF…PEHPEVTSLK (149 aa)). The interval 17 to 207 (SRIDQDNSSF…EIENQLRRTS (191 aa)) is sufficient to inhibit LIPG/EL phospholipase activity. Residues 32-56 (EPKSRFAMLDDVKILANGLLQLGHG) form a required for inhibition of LPL lipase activity region. Residues 85–210 (LSLQTSEIKE…NQLRRTSIQE (126 aa)) adopt a coiled-coil conformation. A glycan (N-linked (GlcNAc...) asparagine) is linked at N115. T226 carries O-linked (GalNAc) threonine glycosylation. The Fibrinogen C-terminal domain maps to 237–455 (VKHDGIPAEC…STKMLIHPTD (219 aa)). C246 and C274 are disulfide-bonded. N-linked (GlcNAc...) asparagine glycosylation is found at N296 and N357. A disulfide bridge connects residues C394 and C408.

Interacts with ANGPTL8. Interacts with ITGB3. In terms of processing, O-glycosylated at Thr-226 by GALNT2; blocks processing and activation by proprotein convertases. In part proteolytically cleaved by proprotein convertases; proposed to be involved in activation. In terms of tissue distribution, expressed principally in liver. Weakly expressed in kidney. Binds to adipocytes. Increased expression and colocalization with activated ITGB3 in glomeruli of patients with nephrotic syndrome showing effaced podocyte foot processes (at protein level).

The protein localises to the secreted. It is found in the cell projection. It localises to the lamellipodium. In terms of biological role, acts in part as a hepatokine that is involved in regulation of lipid and glucose metabolism. Proposed to play a role in the trafficking of energy substrates to either storage or oxidative tissues in response to food intake. Has a stimulatory effect on plasma triglycerides (TG), which is achieved by suppressing plasma TG clearance via inhibition of LPL activity. The inhibition of LPL activity appears to be an indirect mechanism involving recruitment of proprotein convertases PCSK6 and FURIN to LPL leading to cleavage and dissociation of LPL from the cell surface; the function does not require ANGPTL3 proteolytic cleavage but seems to be mediated by the N-terminal domain, and is not inhibited by GPIHBP1. Can inhibit endothelial lipase, causing increased plasma levels of high density lipoprotein (HDL) cholesterol and phospholipids. Can bind to adipocytes to activate lipolysis, releasing free fatty acids and glycerol. Suppresses LPL specifically in oxidative tissues which is required to route very low density lipoprotein (VLDL)-TG to white adipose tissue (WAT) for storage in response to food; the function may involve cooperation with circulating, liver-derived ANGPTL8 and ANGPTL4 expression in WAT. Contributes to lower plasma levels of low density lipoprotein (LDL)-cholesterol by a mechanism that is independent of the canonical pathway implicating APOE and LDLR. May stimulate hypothalamic LPL activity. In vitro inhibits LPL activity; not effective on GPIHBP1-stabilized LPL. Functionally, involved in angiogenesis. Binds to endothelial cells via integrin alpha-V/beta-3 (ITGAV:ITGB3), activates FAK, MAPK and Akt signaling pathways and induces cell adhesion and cell migration. Secreted from podocytes, may modulate properties of glomerular endothelial cells involving integrin alpha-V/beta-3 and Akt signaling. May increase the motility of podocytes. May induce actin filament rearrangements in podocytes implicating integrin alpha-V/beta-3 and Rac1 activation. Binds to hematopoietic stem cells (HSC) and is involved in the regulation of HSC activity probably implicating down-regulation of IKZF1/IKAROS. The polypeptide is Angiopoietin-related protein 3 (ANGPTL3) (Homo sapiens (Human)).